Reading from the N-terminus, the 743-residue chain is 1,4-alpha-glucan branching enzyme GlgB (743 aa).

D416 acts as the Nucleophile in catalysis. The Proton donor role is filled by E469.

This sequence belongs to the glycosyl hydrolase 13 family. GlgB subfamily. Monomer.

It catalyses the reaction Transfers a segment of a (1-&gt;4)-alpha-D-glucan chain to a primary hydroxy group in a similar glucan chain.. Its pathway is glycan biosynthesis; glycogen biosynthesis. Catalyzes the formation of the alpha-1,6-glucosidic linkages in glycogen by scission of a 1,4-alpha-linked oligosaccharide from growing alpha-1,4-glucan chains and the subsequent attachment of the oligosaccharide to the alpha-1,6 position. This chain is 1,4-alpha-glucan branching enzyme GlgB, found in Shewanella baltica (strain OS155 / ATCC BAA-1091).